The chain runs to 543 residues: Glutamyl-tRNA(Gln) amidotransferase subunit B-1, chloroplastic/mitochondrial (543 aa).

A disordered region spans residues 1–47 (MIRAGGPSPSPRGRRAGPIRLPRRAPSSTPTRAKTEEKASADASSRT). The span at 12–23 (RGRRAGPIRLPR) shows a compositional bias: basic residues.

Belongs to the GatB/GatE family. GatB subfamily. As to quaternary structure, subunit of the heterotrimeric GatCAB amidotransferase (AdT) complex, composed of A, B and C subunits.

The protein localises to the mitochondrion. It is found in the plastid. It localises to the chloroplast. The enzyme catalyses L-glutamyl-tRNA(Gln) + L-glutamine + ATP + H2O = L-glutaminyl-tRNA(Gln) + L-glutamate + ADP + phosphate + H(+). Allows the formation of correctly charged Gln-tRNA(Gln) through the transamidation of misacylated Glu-tRNA(Gln) in chloroplasts and mitochondria. The reaction takes place in the presence of glutamine and ATP through an activated gamma-phospho-Glu-tRNA(Gln). This is Glutamyl-tRNA(Gln) amidotransferase subunit B-1, chloroplastic/mitochondrial from Micromonas commoda (strain RCC299 / NOUM17 / CCMP2709) (Picoplanktonic green alga).